The following is a 296-amino-acid chain: Ribose import binding protein RbsB (296 aa).

Residues 1-25 (MNMKKLATLVSAVALSATVSANAMA) form the signal peptide.

Belongs to the bacterial solute-binding protein 2 family. In terms of assembly, the complex is composed of an ATP-binding protein (RbsA), two transmembrane proteins (RbsC) and a solute-binding protein (RbsB).

The protein resides in the periplasm. Part of the ABC transporter complex RbsABC involved in ribose import. Binds ribose. The polypeptide is Ribose import binding protein RbsB (rbsB) (Salmonella typhi).